Reading from the N-terminus, the 62-residue chain is Large ribosomal subunit protein bL28 (62 aa).

It belongs to the bacterial ribosomal protein bL28 family.

This chain is Large ribosomal subunit protein bL28, found in Helicobacter pylori (strain P12).